The chain runs to 349 residues: CCN family member 2 (349 aa).

Residues 1–26 (MTAASMGPVRVAFVVLLALCSRPAVG) form the signal peptide. The 72-residue stretch at 27–98 (QNCSGPCRCP…NRKIGVCTAK (72 aa)) folds into the IGFBP N-terminal domain. N28 is a glycosylation site (N-linked (GlcNAc...) asparagine). Cystine bridges form between C29/C54, C33/C56, C35/C57, C43/C60, C68/C82, and C74/C95. Positions 101 to 167 (APCIFGGTVY…GKCCEEWVCD (67 aa)) constitute a VWFC domain. The TSP type-1 domain maps to 198–243 (NCLVQTTEWSACSKTCGMGISTRVTNDNASCRLEKQSRLCMVRPCE). A glycan (N-linked (GlcNAc...) asparagine) is linked at N225. The heparin-binding stretch occupies residues 247–349 (EENIKKGKKC…YYRKMYGDMA (103 aa)). Disulfide bonds link C256–C293, C273–C307, C284–C323, C287–C325, and C292–C329. The CTCK domain occupies 256-330 (CIRTPKISKP…KTCACHYNCP (75 aa)).

It belongs to the CCN family. In terms of assembly, monomer. Interacts with TSKU. As to expression, expressed in bone marrow and thymic cells. Also expressed one of two Wilms tumors tested.

The protein resides in the secreted. Its subcellular location is the extracellular space. It localises to the extracellular matrix. Major connective tissue mitoattractant secreted by vascular endothelial cells. Promotes proliferation and differentiation of chondrocytes. Is involved in the stimulation of osteoblast differentiation and has a critical role in osteogenesis. Mediates heparin- and divalent cation-dependent cell adhesion in many cell types including fibroblasts, myofibroblasts, endothelial and epithelial cells. Enhances fibroblast growth factor-induced DNA synthesis. The polypeptide is CCN family member 2 (Homo sapiens (Human)).